We begin with the raw amino-acid sequence, 419 residues long: Tyrosine--tRNA ligase 2 (419 aa).

Tyr34 serves as a coordination point for L-tyrosine. Positions 39–48 match the 'HIGH' region motif; the sequence is PTGDSMHIGH. Residues Tyr168 and Gln172 each coordinate L-tyrosine. A 'KMSKS' region motif is present at residues 230–234; it reads KFGKS. Lys233 is a binding site for ATP. The S4 RNA-binding domain maps to 352 to 418; that stretch reads KNIVEWLVDL…GKKNYSLVKL (67 aa).

The protein belongs to the class-I aminoacyl-tRNA synthetase family. TyrS type 1 subfamily. As to quaternary structure, homodimer.

Its subcellular location is the cytoplasm. It catalyses the reaction tRNA(Tyr) + L-tyrosine + ATP = L-tyrosyl-tRNA(Tyr) + AMP + diphosphate + H(+). Its function is as follows. Catalyzes the attachment of tyrosine to tRNA(Tyr) in a two-step reaction: tyrosine is first activated by ATP to form Tyr-AMP and then transferred to the acceptor end of tRNA(Tyr). The polypeptide is Tyrosine--tRNA ligase 2 (Bacillus cereus (strain ZK / E33L)).